The chain runs to 137 residues: uncharacterized protein (137 aa).

The chain crosses the membrane as a helical span at residues 75-91 (MFLDAMVILAVASGVSL). Positions 93-116 (PQLPGRRSHNASTPGAKKPGKDHG) are disordered.

It localises to the membrane. This is an uncharacterized protein from Saccharomyces cerevisiae (strain ATCC 204508 / S288c) (Baker's yeast).